Here is a 487-residue protein sequence, read N- to C-terminus: Glutamyl-tRNA(Gln) amidotransferase subunit A (487 aa).

Active-site charge relay system residues include K78 and S153. S177 acts as the Acyl-ester intermediate in catalysis.

It belongs to the amidase family. GatA subfamily. As to quaternary structure, heterotrimer of A, B and C subunits.

The catalysed reaction is L-glutamyl-tRNA(Gln) + L-glutamine + ATP + H2O = L-glutaminyl-tRNA(Gln) + L-glutamate + ADP + phosphate + H(+). In terms of biological role, allows the formation of correctly charged Gln-tRNA(Gln) through the transamidation of misacylated Glu-tRNA(Gln) in organisms which lack glutaminyl-tRNA synthetase. The reaction takes place in the presence of glutamine and ATP through an activated gamma-phospho-Glu-tRNA(Gln). The protein is Glutamyl-tRNA(Gln) amidotransferase subunit A of Oleidesulfovibrio alaskensis (strain ATCC BAA-1058 / DSM 17464 / G20) (Desulfovibrio alaskensis).